The chain runs to 657 residues: N-acetylgalactosaminyltransferase 7 (657 aa).

Topologically, residues 1-6 (MRLKIG) are cytoplasmic. The chain crosses the membrane as a helical; Signal-anchor for type II membrane protein span at residues 7–29 (FILRSLLVVGSFLGLVVLWSSLS). Disordered regions lie at residues 30 to 66 (SRPDDQSPLSRMREDRDVNNPLPNRGGNGLAPGDDRF) and 83 to 105 (ESIRRKNKAKNEQERHAGGDSQR). At 30 to 657 (SRPDDQSPLS…KWEMNNIHSV (628 aa)) the chain is on the lumenal side. 5 cysteine pairs are disulfide-bonded: C197–C435, C426–C507, C545–C562, C585–C600, and C625–C640. Positions 206 to 317 (LLTSSVVIVF…VNWYAPLVAP (112 aa)) are catalytic subdomain A. Substrate-binding residues include D247 and R277. Mn(2+) contacts are provided by D301 and H303. Positions 381-443 (PYRSPAMAGG…PCSRVGHIYR (63 aa)) are catalytic subdomain B. Substrate is bound at residue W412. Position 440 (H440) interacts with Mn(2+). R443 contacts substrate. The Ricin B-type lectin domain maps to 532-652 (VEWGEIRGLE…SKMTQKWEMN (121 aa)).

Belongs to the glycosyltransferase 2 family. GalNAc-T subfamily. Requires Mn(2+) as cofactor. Highly expressed in sublingual gland. Expressed at lower level in stomach, small intestiine and colon.

It localises to the golgi apparatus membrane. It carries out the reaction L-seryl-[protein] + UDP-N-acetyl-alpha-D-galactosamine = a 3-O-[N-acetyl-alpha-D-galactosaminyl]-L-seryl-[protein] + UDP + H(+). It catalyses the reaction L-threonyl-[protein] + UDP-N-acetyl-alpha-D-galactosamine = a 3-O-[N-acetyl-alpha-D-galactosaminyl]-L-threonyl-[protein] + UDP + H(+). It functions in the pathway protein modification; protein glycosylation. Glycopeptide transferase involved in O-linked oligosaccharide biosynthesis, which catalyzes the transfer of an N-acetyl-D-galactosamine residue to an already glycosylated peptide. In contrast to other proteins of the family, it does not act as a peptide transferase that transfers GalNAc onto serine or threonine residue on the protein receptor, but instead requires the prior addition of a GalNAc on a peptide before adding additional GalNAc moieties. Some peptide transferase activity is however not excluded, considering that its appropriate peptide substrate may remain unidentified. This Mus musculus (Mouse) protein is N-acetylgalactosaminyltransferase 7 (Galnt7).